A 271-amino-acid polypeptide reads, in one-letter code: Sec-independent protein translocase protein TatC (271 aa).

6 helical membrane-spanning segments follow: residues 35 to 55 (IIWT…WHEQ), 93 to 113 (AFIA…WLFI), 124 to 144 (YVLP…VFGY), 178 to 198 (IILG…LALM), 213 to 233 (SILV…IMNM), and 234 to 254 (CVFA…AFLV).

This sequence belongs to the TatC family. In terms of assembly, forms a complex with TatA.

The protein resides in the cell inner membrane. Part of the twin-arginine translocation (Tat) system that transports large folded proteins containing a characteristic twin-arginine motif in their signal peptide across membranes. This chain is Sec-independent protein translocase protein TatC, found in Koribacter versatilis (strain Ellin345).